Reading from the N-terminus, the 188-residue chain is Protein SSX5 (188 aa).

A KRAB-related domain is found at Lys-20–Asp-83. The segment at Asp-78–Glu-188 is disordered. A compositionally biased stretch (basic and acidic residues) spans Thr-112–Asp-122. Over residues Lys-144–Ser-155 the composition is skewed to polar residues. A compositionally biased stretch (basic residues) spans Gly-156–Glu-170. Acidic residues predominate over residues Glu-179–Glu-188.

The protein belongs to the SSX family.

Could act as a modulator of transcription. This chain is Protein SSX5 (SSX5), found in Homo sapiens (Human).